Here is a 721-residue protein sequence, read N- to C-terminus: Fatty acid oxidation complex subunit alpha (721 aa).

Residues 1–190 (MIYEGKAITV…KVGAVDAVVA (190 aa)) are enoyl-CoA hydratase/isomerase. Asp-297 is a binding site for substrate. Positions 312–721 (KDVKQAAVLG…SFFGQASSEE (410 aa)) are 3-hydroxyacyl-CoA dehydrogenase. Residues Met-325, Asp-344, 401-403 (VVE), Lys-408, and Ser-430 contribute to the NAD(+) site. Catalysis depends on His-451, which acts as the For 3-hydroxyacyl-CoA dehydrogenase activity. Asn-454 is a binding site for NAD(+). Substrate contacts are provided by Asn-501 and Tyr-660.

The protein in the N-terminal section; belongs to the enoyl-CoA hydratase/isomerase family. It in the C-terminal section; belongs to the 3-hydroxyacyl-CoA dehydrogenase family. Heterotetramer of two alpha chains (FadB) and two beta chains (FadA).

The catalysed reaction is a (3S)-3-hydroxyacyl-CoA + NAD(+) = a 3-oxoacyl-CoA + NADH + H(+). It carries out the reaction a (3S)-3-hydroxyacyl-CoA = a (2E)-enoyl-CoA + H2O. The enzyme catalyses a 4-saturated-(3S)-3-hydroxyacyl-CoA = a (3E)-enoyl-CoA + H2O. It catalyses the reaction (3S)-3-hydroxybutanoyl-CoA = (3R)-3-hydroxybutanoyl-CoA. The catalysed reaction is a (3Z)-enoyl-CoA = a 4-saturated (2E)-enoyl-CoA. It carries out the reaction a (3E)-enoyl-CoA = a 4-saturated (2E)-enoyl-CoA. Its pathway is lipid metabolism; fatty acid beta-oxidation. Involved in the aerobic and anaerobic degradation of long-chain fatty acids via beta-oxidation cycle. Catalyzes the formation of 3-oxoacyl-CoA from enoyl-CoA via L-3-hydroxyacyl-CoA. It can also use D-3-hydroxyacyl-CoA and cis-3-enoyl-CoA as substrate. The protein is Fatty acid oxidation complex subunit alpha of Pseudomonas savastanoi pv. phaseolicola (strain 1448A / Race 6) (Pseudomonas syringae pv. phaseolicola (strain 1448A / Race 6)).